A 172-amino-acid polypeptide reads, in one-letter code: uncharacterized protein (172 aa).

A signal peptide spans 1–22 (MKLFQLLLLVLTISSFIISNNG). Residues 23 to 140 (LVESHQGRMH…FSYENSSNET (118 aa)) are Extracellular-facing. A disordered region spans residues 27–69 (HQGRMHRGSGERHHRAGGNQQQPQPPSEQQVESSYNSNDDGSS). Positions 29-42 (GRMHRGSGERHHRA) are enriched in basic residues. The span at 53 to 69 (SEQQVESSYNSNDDGSS) shows a compositional bias: low complexity. 2 N-linked (GlcNAc...) asparagine glycosylation sites follow: Asn135 and Asn138. The chain crosses the membrane as a helical span at residues 141–161 (IVIYINPVTLVFTLVLLLTFI). Residues 162 to 172 (VLTITQSLRKY) lie on the Cytoplasmic side of the membrane.

It is found in the membrane. This is an uncharacterized protein from Dictyostelium discoideum (Social amoeba).